A 183-amino-acid chain; its full sequence is Early E3 20.2 kDa glycoprotein (183 aa).

N-linked (GlcNAc...) asparagine; by host glycosylation is found at asparagine 30, asparagine 73, asparagine 117, asparagine 134, and asparagine 135.

Belongs to the adenoviridae E3_20 family.

This Homo sapiens (Human) protein is Early E3 20.2 kDa glycoprotein.